We begin with the raw amino-acid sequence, 751 residues long: FAD-dependent monooxygenase atnA (751 aa).

A helical membrane pass occupies residues 8 to 28 (LIVGGGVAGLSLAIMLEAYGF). Residues glutamate 34, glycine 48, and arginine 109 each contribute to the FAD site. Residue tyrosine 218 is part of the active site. FAD-binding residues include aspartate 311 and alanine 324. The next 8 helical transmembrane spans lie at 446-466 (PLAT…PWSV), 481-501 (SEVF…LWVI), 508-528 (LLIS…YWGW), 563-583 (ALLP…ALAS), 590-610 (DWWP…STFL), 639-659 (IAVV…AALL), 663-683 (IISL…ALIV), and 706-726 (AWAV…LAGA).

This sequence belongs to the paxM FAD-dependent monooxygenase family. It depends on FAD as a cofactor.

It is found in the membrane. Its pathway is secondary metabolite biosynthesis; terpenoid biosynthesis. In terms of biological role, FAD-dependent monooxygenase; part of the gene cluster that mediates the biosynthesis of the meroterpenoids arthripenoids. The pathway begins with the HR-PKS atnH that catalyzes two chain-extension steps to form a reduced triketide, which then primes the SAT domain in the NR-PKS atnG to initiate three more cycles of extension to give a linear hexaketide corresponding to the polyketide part of arthripenoids. The FAD-dependent monooxygenase atnJ then performs an oxidative decarboxylation at C11 of the atnH/atnG product, via an electrophilic aromatic hydroxylation with concomitant ipso-decarboxylation. The membrane-bound polyprenyl transferase atnF then introduces a farnesyl group before the FAD-dependent monooxygenase atnK functions as the first epoxidase on terminal C12'-C13' olefin, followed by a second epoxidation on C7'-C8' catalyzed by atnA. The terpene cyclase/mutase atnI then initiates the sequential tricyclic ring formation through protonation of the terminal epoxide and catalyzes the regioselective and stereoselective 6/6/6-tricyclic ring formation. The cytochrome P450 monooxygenase atnM is responsible for hydroxylating both C1' and C10'. The next steps may involve ketoreduction and acetyl transfer by the ketoreductase atnB and the acetyltransferase atnC, and lead to the production of arthripenoid B, the final biosynthetic product of the atn cluster. The hydroquinone moiety in arthripenoid B is prone to undergo spontaneous oxidation to afford a benzoquinone compound, a key intermediate for generating structure diversity. For instance, addition of a cysteine followed by ring contraction gives arthripenoid A, tautomerization gives the main product arthripenoid C, addition of a molecular of water or amine affords arthripenoid D or E, respectively, and loss of one water forms arthripenoid F. The polypeptide is FAD-dependent monooxygenase atnA (Arthrinium sp).